The primary structure comprises 221 residues: Glutathione S-transferase A3 (221 aa).

Ala2 is modified (N-acetylalanine). Positions 3 to 83 constitute a GST N-terminal domain; that stretch reads GKPVLHYFDG…YIASKYNLYG (81 aa). N6-succinyllysine is present on Lys4. Glutathione is bound by residues Tyr9, Arg45, 54–55, and 67–68; these read QV and QT. The region spanning 85 to 207 is the GST C-terminal domain; sequence DMKERAIIDM…LQPGSQRKPF (123 aa).

In terms of assembly, homodimer.

It is found in the cytoplasm. It catalyses the reaction RX + glutathione = an S-substituted glutathione + a halide anion + H(+). It carries out the reaction androst-5-ene-3,17-dione = androst-4-ene-3,17-dione. The enzyme catalyses pregn-5-ene-3,20-dione = progesterone. Conjugation of reduced glutathione to a wide number of exogenous and endogenous hydrophobic electrophiles. Catalyzes isomerization reactions that contribute to the biosynthesis of steroid hormones. Efficiently catalyze obligatory double-bond isomerizations of delta(5)-androstene-3,17-dione and delta(5)-pregnene-3,20-dione, precursors to testosterone and progesterone, respectively. Has a high catalytic activity for aflatoxin B1-8,9 epoxide. This Mus musculus (Mouse) protein is Glutathione S-transferase A3.